The primary structure comprises 432 residues: 23S rRNA (uracil(1939)-C(5))-methyltransferase RlmD (432 aa).

The region spanning 1-53 (MPIGKIESLDHEARGITRQEGKAIFVDGALPGETVEYASFRRKSKFELAHLVH) is the TRAM domain. 4 residues coordinate [4Fe-4S] cluster: Cys-66, Cys-72, Cys-75, and Cys-154. The S-adenosyl-L-methionine site is built by Gln-263, Phe-292, Asn-297, Glu-313, Asn-341, and Asp-362. Catalysis depends on Cys-388, which acts as the Nucleophile.

This sequence belongs to the class I-like SAM-binding methyltransferase superfamily. RNA M5U methyltransferase family. RlmD subfamily.

The catalysed reaction is uridine(1939) in 23S rRNA + S-adenosyl-L-methionine = 5-methyluridine(1939) in 23S rRNA + S-adenosyl-L-homocysteine + H(+). Functionally, catalyzes the formation of 5-methyl-uridine at position 1939 (m5U1939) in 23S rRNA. This Dechloromonas aromatica (strain RCB) protein is 23S rRNA (uracil(1939)-C(5))-methyltransferase RlmD.